A 397-amino-acid chain; its full sequence is Elongation factor Tu-1 (397 aa).

The region spanning 10–206 is the tr-type G domain; that stretch reads KPHVNIGTIG…AVDENIPEPE (197 aa). Residues 19-26 are G1; the sequence is GHIDHGKT. A GTP-binding site is contributed by 19–26; that stretch reads GHIDHGKT. Thr26 is a binding site for Mg(2+). A G2 region spans residues 62 to 66; the sequence is GITIS. Positions 83–86 are G3; it reads DCPG. GTP is bound by residues 83 to 87 and 138 to 141; these read DCPGH and NKAD. A G4 region spans residues 138–141; the sequence is NKAD. A G5 region spans residues 176–178; it reads SAL. Thr386 is subject to Phosphothreonine.

This sequence belongs to the TRAFAC class translation factor GTPase superfamily. Classic translation factor GTPase family. EF-Tu/EF-1A subfamily. In terms of assembly, monomer. Post-translationally, phosphorylated on threonine and serine.

The protein resides in the cytoplasm. The enzyme catalyses GTP + H2O = GDP + phosphate + H(+). GTP hydrolase that promotes the GTP-dependent binding of aminoacyl-tRNA to the A-site of ribosomes during protein biosynthesis. The polypeptide is Elongation factor Tu-1 (Streptomyces collinus).